The primary structure comprises 104 residues: UPF0235 protein MTH_637 (104 aa).

It belongs to the UPF0235 family.

The chain is UPF0235 protein MTH_637 from Methanothermobacter thermautotrophicus (strain ATCC 29096 / DSM 1053 / JCM 10044 / NBRC 100330 / Delta H) (Methanobacterium thermoautotrophicum).